The chain runs to 907 residues: Eukaryotic translation initiation factor 4 gamma 2 (907 aa).

Residue M1 is modified to N-acetylmethionine. Residues 1 to 71 (MESAIAEGGA…SAANNSANEK (71 aa)) form a disordered region. The residue at position 11 (S11) is a Phosphoserine. An MIF4G domain is found at 78–308 (FRKVRGILNK…QDTVELREHH (231 aa)). The residue at position 89 (T89) is a Phosphothreonine. R360 is subject to Omega-N-methylarginine. The residue at position 395 (S395) is a Phosphoserine. The residue at position 431 (K431) is an N6-methyllysine. Position 443 is a phosphoserine (S443). The interval 498-541 (PPSAQPPRTQTPPLGQTPQLGLKTNPPLIQEKPAKTSKKPPPSK) is disordered. A compositionally biased stretch (polar residues) spans 503–516 (PPRTQTPPLGQTPQ). R505 carries the post-translational modification Omega-N-methylarginine. A phosphothreonine mark is found at T508 and T514. Positions 543–666 (ELLKLTETVV…SISELAQPLE (124 aa)) constitute an MI domain. Residue K575 forms a Glycyl lysine isopeptide (Lys-Gly) (interchain with G-Cter in SUMO2) linkage. The region spanning 720-904 (EGKGLSFLFP…ETAEEEESEE (185 aa)) is the W2 domain. Position 902 is a phosphoserine (S902).

The protein belongs to the eukaryotic initiation factor 4G family. In terms of assembly, interacts with the serine/threonine protein kinases MKNK1 and MKNK2. Binds EIF4A and EIF3. Interacts with MIF4GD. Interacts with DAZAP2. In terms of processing, phosphorylation; hyperphosphorylated during mitosis.

Its function is as follows. Appears to play a role in the switch from cap-dependent to IRES-mediated translation during mitosis, apoptosis and viral infection. Cleaved by some caspases and viral proteases. In Bos taurus (Bovine), this protein is Eukaryotic translation initiation factor 4 gamma 2 (EIF4G2).